The chain runs to 193 residues: Ion-translocating oxidoreductase complex subunit A (193 aa).

The next 6 helical transmembrane spans lie at 5-25 (LMLL…FLGL), 39-59 (IGMG…TWLI), 62-82 (FLLV…LVIA), 102-122 (VLGI…VALL), 134-154 (VLYG…FAGL), and 170-190 (APIS…FAGL).

The protein belongs to the NqrDE/RnfAE family. In terms of assembly, the complex is composed of six subunits: RnfA, RnfB, RnfC, RnfD, RnfE and RnfG.

It is found in the cell inner membrane. In terms of biological role, part of a membrane-bound complex that couples electron transfer with translocation of ions across the membrane. The sequence is that of Ion-translocating oxidoreductase complex subunit A from Azoarcus sp. (strain BH72).